The sequence spans 155 residues: MSAVLDTPVAVRRTAMDLLARREHGRVELTRKLRQRGAPDELIEPALDRLAEEGLLSEARYLESFIRYRSNAGYGPARIREELGQRGLDRGDIDQSLRESEVDWAARLEEVWQRKFAGQRPQDPRSRAQQTRFLAYRGFSMEMIGRLLSGRDLYD.

Belongs to the RecX family.

The protein localises to the cytoplasm. In terms of biological role, modulates RecA activity. The sequence is that of Regulatory protein RecX from Pseudomonas entomophila (strain L48).